The following is a 206-amino-acid chain: Small ribosomal subunit protein uS4 (206 aa).

Residues 96–156 enclose the S4 RNA-binding domain; that stretch reads TRLDNVVYRM…EKSRTQARIK (61 aa).

This sequence belongs to the universal ribosomal protein uS4 family. Part of the 30S ribosomal subunit. Contacts protein S5. The interaction surface between S4 and S5 is involved in control of translational fidelity.

Functionally, one of the primary rRNA binding proteins, it binds directly to 16S rRNA where it nucleates assembly of the body of the 30S subunit. In terms of biological role, with S5 and S12 plays an important role in translational accuracy. In Shewanella denitrificans (strain OS217 / ATCC BAA-1090 / DSM 15013), this protein is Small ribosomal subunit protein uS4.